The following is a 159-amino-acid chain: MKITILAVGKLKEKYWKQAISEYEKRLSAYSKIEIIEVPDEKAPENMSDKEIEQVKEKEGQRLLAKIKPQATVITLEIQGKMLSSEGLAEEMQRRMTQGQSDFVFVIGGSNGLHENVLQRSNYALSFSKMTFPHQMMRVVLIEQVYRAFKIMRGEAYHK.

Residues Leu76, Gly108, and 127 to 132 each bind S-adenosyl-L-methionine; that span reads FSKMTF.

Belongs to the RNA methyltransferase RlmH family. As to quaternary structure, homodimer.

The protein localises to the cytoplasm. It catalyses the reaction pseudouridine(1915) in 23S rRNA + S-adenosyl-L-methionine = N(3)-methylpseudouridine(1915) in 23S rRNA + S-adenosyl-L-homocysteine + H(+). In terms of biological role, specifically methylates the pseudouridine at position 1915 (m3Psi1915) in 23S rRNA. The chain is Ribosomal RNA large subunit methyltransferase H from Staphylococcus haemolyticus (strain JCSC1435).